The chain runs to 379 residues: Chaperone protein DnaJ (379 aa).

The J domain maps to 5–69 (DYYEVLGISK…NKRASYDQFG (65 aa)). A CR-type zinc finger spans residues 136–218 (GTTKEISIRK…CHGKGTENKT (83 aa)). Zn(2+) is bound by residues Cys149, Cys152, Cys166, Cys169, Cys192, Cys195, Cys206, and Cys209. CXXCXGXG motif repeat units follow at residues 149 to 156 (CETCHGDG), 166 to 173 (CSYCNGAG), 192 to 199 (CPKCNGSG), and 206 to 213 (CPTCHGKG).

Belongs to the DnaJ family. Homodimer. Zn(2+) serves as cofactor.

It is found in the cytoplasm. Participates actively in the response to hyperosmotic and heat shock by preventing the aggregation of stress-denatured proteins and by disaggregating proteins, also in an autonomous, DnaK-independent fashion. Unfolded proteins bind initially to DnaJ; upon interaction with the DnaJ-bound protein, DnaK hydrolyzes its bound ATP, resulting in the formation of a stable complex. GrpE releases ADP from DnaK; ATP binding to DnaK triggers the release of the substrate protein, thus completing the reaction cycle. Several rounds of ATP-dependent interactions between DnaJ, DnaK and GrpE are required for fully efficient folding. Also involved, together with DnaK and GrpE, in the DNA replication of plasmids through activation of initiation proteins. The chain is Chaperone protein DnaJ from Staphylococcus aureus (strain bovine RF122 / ET3-1).